The sequence spans 751 residues: MTDKQHTRSVSESENPAIPSPTPKVSRPRRNKDWWPNQLDLSVLHTHSHLSCPLEEEFDYADQFKGLDVDALKQDLIQLMTTSQDWWPADYGHYGPLFIRMSWHAAGTYRIADGRGGGGEGQQRFAPLNSWPDNANLDKARRLLWPLKKKYGQKVSWADLLIFAGNVAYESMGFKTFGFGFGRPDVWEPEDIFWGPEDTWLGDERYSGDRELAKPLANVQMGLIYVNPEGPGGNPDPLAAARDIRETFARMAMNDEETVALIVGGHTVGKTHGAAPAAGNVGLEPEGAPIEEQGLGWKNKFGSGKGSDAITSGLEGAWTNNPTKWDNGFLENLFKYEWELTTSPAGAKQWKPKNPEANDTVPDAHGASRRHSPTMLTTDLSLRMDPIYGPIAKRFHDNPDQLEDAFAKAWFKLLHRDMGPRSRYLGPWIPEAQLWQDPIPPVDHELVSEQDIDALKRTILGSGLSVPELISTAWGAAASFRGTDKRGGANGARIRLAPQKDWESNEPSRLAKVLTALERIQNDFNGSQSGGKKVSLADLIVLGGCAAVEEAARKAGFNISVPFAPGRTDASQEQTDESIFDVLEPIGDAFRNYFRAEDPLSPETRLLDRANLLKLTAPQMTVLVGGMRMLDANHGQSRHGVFTDKPGTLSNEFFVNLLDIGTAWRPSVADKSVYEGIDRTSGKTRWTATAADLVFGAHSQLRALAEVYACDDGKERFVRDFVAAWNKVMNLDRYDLLGTRNGRRAVTSKPV.

Positions 1-11 (MTDKQHTRSVS) are enriched in basic and acidic residues. The disordered stretch occupies residues 1–31 (MTDKQHTRSVSESENPAIPSPTPKVSRPRRN). A cross-link (tryptophyl-tyrosyl-methioninium (Trp-Tyr) (with M-251)) is located at residues 103–225 (WHAAGTYRIA…LANVQMGLIY (123 aa)). Catalysis depends on H104, which acts as the Proton acceptor. Positions 225–251 (YVNPEGPGGNPDPLAAARDIRETFARM) form a cross-link, tryptophyl-tyrosyl-methioninium (Tyr-Met) (with W-103). H266 contributes to the heme b binding site. The interval 345–375 (AGAKQWKPKNPEANDTVPDAHGASRRHSPTM) is disordered.

The protein belongs to the peroxidase family. Peroxidase/catalase subfamily. As to quaternary structure, homodimer or homotetramer. Heme b is required as a cofactor. Formation of the three residue Trp-Tyr-Met cross-link is important for the catalase, but not the peroxidase activity of the enzyme.

The enzyme catalyses H2O2 + AH2 = A + 2 H2O. It catalyses the reaction 2 H2O2 = O2 + 2 H2O. Bifunctional enzyme with both catalase and broad-spectrum peroxidase activity. The sequence is that of Catalase-peroxidase 1 from Cupriavidus pinatubonensis (strain JMP 134 / LMG 1197) (Cupriavidus necator (strain JMP 134)).